The following is a 446-amino-acid chain: RUN domain-containing protein 3A (446 aa).

An interaction with RAP2A region spans residues 1–298 (METSFVQTTM…LQLQLEEAAA (298 aa)). The RUN domain occupies 52 to 189 (DDSSEEFVNF…IDFSFCLKGE (138 aa)). At Thr-215 the chain carries Phosphothreonine. Residues 216 to 239 (DEEERHSAESSTSEDNSPEHPYLP) form a disordered region. Ser-232 bears the Phosphoserine mark. Residues 267–322 (YLEELVRLRESQLKDLEAENRRLQLQLEEAAAQNQREKRELEGVILELQEQLTGLI) are a coiled coil. The span at 372–384 (PLSAEASLSSDSQ) shows a compositional bias: polar residues. The disordered stretch occupies residues 372–404 (PLSAEASLSSDSQRLGEGTRDEEPWGPIGKDPT). Ser-416 and Ser-419 each carry phosphoserine.

This sequence belongs to the RUNDC3 family. In terms of assembly, interacts with the GTP-bound form of RAP2A.

Functionally, may act as an effector of RAP2A in neuronal cells. This Pongo abelii (Sumatran orangutan) protein is RUN domain-containing protein 3A (RUNDC3A).